The sequence spans 617 residues: Serine/threonine-protein phosphatase 2A activator 1 (617 aa).

The span at 1 to 11 (MDPTSKRPPPA) shows a compositional bias: pro residues. Disordered regions lie at residues 1–25 (MDPTSKRPPPAASSSTTYPPLPKLE), 84–169 (VSTS…ESES), 230–261 (GAGGEKKEEEEGTETETETETEGDSDKKTNEQ), 376–398 (SSPNEPTPLEGSVPNAPKPSDIT), and 572–617 (RFTP…PWTK). The segment covering 84 to 93 (VSTSEPTTDG) has biased composition (polar residues). The span at 94 to 104 (QQQQQQQQQRQ) shows a compositional bias: low complexity. A compositionally biased stretch (acidic residues) spans 239–252 (EEGTETETETETEG).

It belongs to the PTPA-type PPIase family.

The protein resides in the cytoplasm. It localises to the nucleus. It catalyses the reaction [protein]-peptidylproline (omega=180) = [protein]-peptidylproline (omega=0). PPIases accelerate the folding of proteins. It catalyzes the cis-trans isomerization of proline imidic peptide bonds in oligopeptides. Acts as a regulatory subunit for PP2A-like phosphatases modulating their activity or substrate specificity, probably by inducing a conformational change in the catalytic subunit, a direct target of the PPIase. Can reactivate inactive phosphatase PP2A-phosphatase methylesterase complexes (PP2Ai) in presence of ATP and Mg(2+) by dissociating the inactive form from the complex. The protein is Serine/threonine-protein phosphatase 2A activator 1 (rrd-1) of Neurospora crassa (strain ATCC 24698 / 74-OR23-1A / CBS 708.71 / DSM 1257 / FGSC 987).